The sequence spans 430 residues: tRNA-2-methylthio-N(6)-dimethylallyladenosine synthase (430 aa).

The MTTase N-terminal domain occupies 2–111 (KKIHIKTYGC…IPQAVERAIN (110 aa)). Residues cysteine 11, cysteine 47, cysteine 76, cysteine 147, cysteine 151, and cysteine 154 each coordinate [4Fe-4S] cluster. Residues 133–364 (RNSKHHAWIT…LNLQKEINKQ (232 aa)) enclose the Radical SAM core domain. In terms of domain architecture, TRAM spans 367-428 (ENYLNKTVEI…AGPLYGDIIK (62 aa)).

This sequence belongs to the methylthiotransferase family. MiaB subfamily. As to quaternary structure, monomer. The cofactor is [4Fe-4S] cluster.

The protein localises to the cytoplasm. It carries out the reaction N(6)-dimethylallyladenosine(37) in tRNA + (sulfur carrier)-SH + AH2 + 2 S-adenosyl-L-methionine = 2-methylsulfanyl-N(6)-dimethylallyladenosine(37) in tRNA + (sulfur carrier)-H + 5'-deoxyadenosine + L-methionine + A + S-adenosyl-L-homocysteine + 2 H(+). Catalyzes the methylthiolation of N6-(dimethylallyl)adenosine (i(6)A), leading to the formation of 2-methylthio-N6-(dimethylallyl)adenosine (ms(2)i(6)A) at position 37 in tRNAs that read codons beginning with uridine. This Thermosipho melanesiensis (strain DSM 12029 / CIP 104789 / BI429) protein is tRNA-2-methylthio-N(6)-dimethylallyladenosine synthase.